A 445-amino-acid chain; its full sequence is MIGRFIARNYTTSIFQESKRIVESTTLSNGLKVVSLVGGYTGPAVSLGLYIKTGSRNETQETAGLNQVLKGLAFESNTNKLGIEVQRDIEVSGSTAFAQASRDNLLIALQTLPNRSLQMLNNLANITKPTLPYHEVRDVTEIIVKESEAYNHDSYSSIFESVHQTAFRGKTLGRPLVAPICNLGNITKDAVTNWVNSTYKPSNMILVGVGLSHNELIEEAEKVTFGNDESSTSISNETAQYIGGESLKYSSGNSKVVLAFEGTAQSNIKDVAAFSVLQSILGNGCPKTAPGHGRTSRLFSLTKNNSNIVNSEAFNLTYGDSGLFGVVAEVEGATVGKTVSLITSEIVAASKTAGQELERAKAVTKSSVLEQAESRTSALEFIGKQAIYTDKVLTPAEFAEEISKVTSEDIKRVAKKMTSKKPTLVVVGDVSDAPTIESVQSQLKL.

The N-terminal 13 residues, 1–13 (MIGRFIARNYTTS), are a transit peptide targeting the mitochondrion.

It belongs to the peptidase M16 family. Heterodimer of alpha and beta subunits, forming the mitochondrial processing protease (MPP) in which subunit alpha is involved in substrate recognition and binding and subunit beta is the catalytic subunit.

The protein resides in the mitochondrion matrix. Functionally, substrate recognition and binding subunit of the essential mitochondrial processing protease (MPP), which cleaves the mitochondrial sequence off newly imported precursors proteins. The chain is Mitochondrial-processing peptidase subunit alpha-2 (mppA2) from Dictyostelium discoideum (Social amoeba).